The primary structure comprises 109 residues: MDIWRPEIKYLRYTNGFNVSELEDACFKFNYKFPKVGYCRVPSHAWCRNQGSFCATLTLYGKSKHYDKYFGVITGFTAFANTVEEAVNKLVFLAVDFITWRRQELNVYG.

This sequence belongs to the coronaviruses ns12.7 protein family.

The polypeptide is Non-structural protein of 12.7 kDa (Bos taurus (Bovine)).